A 158-amino-acid chain; its full sequence is Cyclic pyranopterin monophosphate synthase (158 aa).

Substrate is bound by residues 75–77 (LCH) and 113–114 (ME). The active site involves Asp-128.

It belongs to the MoaC family. In terms of assembly, homohexamer; trimer of dimers.

The enzyme catalyses (8S)-3',8-cyclo-7,8-dihydroguanosine 5'-triphosphate = cyclic pyranopterin phosphate + diphosphate. It participates in cofactor biosynthesis; molybdopterin biosynthesis. Functionally, catalyzes the conversion of (8S)-3',8-cyclo-7,8-dihydroguanosine 5'-triphosphate to cyclic pyranopterin monophosphate (cPMP). This is Cyclic pyranopterin monophosphate synthase from Dinoroseobacter shibae (strain DSM 16493 / NCIMB 14021 / DFL 12).